Consider the following 107-residue polypeptide: MEYMFLLMSKFFFVFPIIIYIGPAEIIKPQAAEENSRRRILNPNENKEEIVKRRRRIGSKPPSCEKKCYGCEPCEAIQFPTISSIPHLSPHYANYQPEGWRCHCPPP.

The first 24 residues, 1–24 (MEYMFLLMSKFFFVFPIIIYIGPA), serve as a signal peptide directing secretion. Intrachain disulfides connect cysteine 64-cysteine 102, cysteine 68-cysteine 74, and cysteine 71-cysteine 104.

The protein belongs to the plant cysteine rich small secretory peptide family. Epidermal patterning factor subfamily.

The protein resides in the secreted. Its function is as follows. Controls stomatal patterning. In Arabidopsis thaliana (Mouse-ear cress), this protein is EPIDERMAL PATTERNING FACTOR-like protein 3.